Here is a 513-residue protein sequence, read N- to C-terminus: Maturase K (513 aa).

It belongs to the intron maturase 2 family. MatK subfamily.

It localises to the plastid. It is found in the chloroplast. Its function is as follows. Usually encoded in the trnK tRNA gene intron. Probably assists in splicing its own and other chloroplast group II introns. This is Maturase K from Sporobolus michauxianus (Prairie cordgrass).